The sequence spans 1657 residues: Thrombospondin type-1 domain-containing protein 7A (1657 aa).

An N-terminal signal peptide occupies residues M1–A47. Topologically, residues A48–W1607 are extracellular. 3 TSP type-1 domains span residues T57–D116, E120–Q192, and D194–E247. The N-linked (GlcNAc...) asparagine glycan is linked to N234. Residues M265 to R311 form a disordered region. A coiled-coil region spans residues H267 to K315. Residues R269–N280 show a composition bias toward basic residues. The segment covering K281 to L299 has biased composition (basic and acidic residues). Residues I300–Q309 show a composition bias toward basic residues. Residue N332 is glycosylated (N-linked (GlcNAc...) asparagine). 16 TSP type-1 domains span residues E360–G416, A423–P510, E512–Y574, D634–T695, V696–K769, D771–Q831, S832–Q904, D906–D959, K960–P1033, D1035–N1095, Q1096–P1163, C1166–Y1220, H1221–P1284, N1286–Y1341, R1342–P1412, and D1414–Y1475. 3 cysteine pairs are disulfide-bonded: C435–C505, C455–C509, and C466–C494. N-linked (GlcNAc...) asparagine glycosylation is present at N450. An N-linked (GlcNAc...) asparagine glycan is attached at N500. Cystine bridges form between C635–C677 and C646–C650. The N-linked (GlcNAc...) asparagine glycan is linked to N679. Intrachain disulfides connect C689/C694, C707/C764, C728/C768, C739/C752, C772/C814, C783/C787, and C824/C830. N717 is a glycosylation site (N-linked (GlcNAc...) asparagine). N968 carries an N-linked (GlcNAc...) asparagine glycan. Cystine bridges form between C972–C1028, C994–C1032, C1005–C1018, C1036–C1073, C1047–C1051, and C1090–C1094. N1043 carries N-linked (GlcNAc...) asparagine glycosylation. A glycan (N-linked (GlcNAc...) asparagine) is linked at N1182. C1213 and C1219 are oxidised to a cystine. Residue N1225 is glycosylated (N-linked (GlcNAc...) asparagine). 12 disulfide bridges follow: C1232/C1279, C1240/C1283, C1251/C1264, C1287/C1325, C1298/C1302, C1335/C1340, C1351/C1407, C1358/C1411, C1369/C1388, C1415/C1459, C1426/C1430, and C1469/C1474. N-linked (GlcNAc...) asparagine glycosylation occurs at N1276. Residue N1366 is glycosylated (N-linked (GlcNAc...) asparagine). N-linked (GlcNAc...) asparagine glycosylation is found at N1500 and N1547. The disordered stretch occupies residues D1570–R1591. The chain crosses the membrane as a helical span at residues V1608–L1628. Residues A1629–M1657 are Cytoplasmic-facing.

Post-translationally, proteolytic cleavage in the extracellular region generates a 210 kDa soluble form. In terms of processing, extensively N-glycosylated. In terms of tissue distribution, detected on kidney podocytes along the glomerular capillary wall (at protein level).

It localises to the cell membrane. Its subcellular location is the cell projection. It is found in the secreted. Plays a role in actin cytoskeleton rearrangement. Functionally, the soluble form promotes endothelial cell migration and filopodia formation during sprouting angiogenesis via a FAK-dependent mechanism. This chain is Thrombospondin type-1 domain-containing protein 7A (THSD7A), found in Homo sapiens (Human).